Here is a 260-residue protein sequence, read N- to C-terminus: MLDKVKNVIVVLSGKGGVGKSTVSTQLSLALRKNGFKVGLLDIDLCGPSVPYLLGLEGRDIFQCDEGWVPVYTDEFQTLAVMSIGFLLKNREDPVIWRGPKKTMMIRQFLTDVRWDELDYLIIDTPPGTSDEHITVMECLKEVGCHGAIIVTTPQEVALDDVRKEITFCKKTGINILGIVENMSGFVCPHCTSCTNIFSSNGGVSLATYAQVPHLGTLPIDPRVGVLAGTTTSVLDELPDSTTAEVLTHLVEKLKTMLAS.

14 to 21 serves as a coordination point for ATP; sequence GKGGVGKS. [4Fe-4S] cluster contacts are provided by C188 and C191.

Belongs to the Mrp/NBP35 ATP-binding proteins family. NUBP2/CFD1 subfamily. As to quaternary structure, heterotetramer of 2 Nubp1 and 2 Nubp2 chains. The cofactor is [4Fe-4S] cluster.

It localises to the cytoplasm. Functionally, component of the cytosolic iron-sulfur (Fe/S) protein assembly (CIA) machinery. Required for maturation of extramitochondrial Fe-S proteins. The Nubp1-Nubp2 heterotetramer forms a Fe-S scaffold complex, mediating the de novo assembly of an Fe-S cluster and its transfer to target apoproteins. This is Cytosolic Fe-S cluster assembly factor Nubp2 homolog from Drosophila simulans (Fruit fly).